Reading from the N-terminus, the 168-residue chain is Lipoprotein signal peptidase (168 aa).

Transmembrane regions (helical) follow at residues 57–77 and 86–106; these read PKEV…LYVF and FILP…DRIT. Residues Asp-112 and Asp-138 contribute to the active site. The helical transmembrane segment at 131–151 threads the bilayer; sequence WPIFNIADSAITIGACLLILF.

It belongs to the peptidase A8 family.

It localises to the cell inner membrane. The catalysed reaction is Release of signal peptides from bacterial membrane prolipoproteins. Hydrolyzes -Xaa-Yaa-Zaa-|-(S,diacylglyceryl)Cys-, in which Xaa is hydrophobic (preferably Leu), and Yaa (Ala or Ser) and Zaa (Gly or Ala) have small, neutral side chains.. It participates in protein modification; lipoprotein biosynthesis (signal peptide cleavage). Its function is as follows. This protein specifically catalyzes the removal of signal peptides from prolipoproteins. This chain is Lipoprotein signal peptidase, found in Chlorobium phaeobacteroides (strain DSM 266 / SMG 266 / 2430).